Here is a 2347-residue protein sequence, read N- to C-terminus: Proto-oncogene tyrosine-protein kinase ROS (2347 aa).

The signal sequence occupies residues 1-27; the sequence is MKNIYCLIPKLVNFATLGCLWISVVQC. The Extracellular segment spans residues 28–1859; that stretch reads TVLNSCLKSC…LVGDDFWIPE (1832 aa). N-linked (GlcNAc...) asparagine glycans are attached at residues Asn-52, Asn-114, and Asn-123. Fibronectin type-III domains follow at residues 101-196 and 197-285; these read LPTA…VPET and APLI…SSSA. N-linked (GlcNAc...) asparagine glycans are attached at residues Asn-324, Asn-352, Asn-396, Asn-471, Asn-607, Asn-628, Asn-706, Asn-714, Asn-732, Asn-939, Asn-961, Asn-1015, Asn-1087, Asn-1090, Asn-1095, Asn-1211, Asn-1272, Asn-1330, Asn-1458, Asn-1461, Asn-1474, Asn-1499, Asn-1565, Asn-1669, Asn-1715, Asn-1738, and Asn-1808. The 115-residue stretch at 557 to 671 folds into the Fibronectin type-III 3 domain; that stretch reads LPGRPQELSV…EPSVGTTLVP (115 aa). Fibronectin type-III domains follow at residues 947–1042 and 1043–1150; these read IPDS…TVPS and APEN…TSEI. Fibronectin type-III domains are found at residues 1450 to 1556, 1557 to 1656, 1658 to 1751, and 1752 to 1854; these read DTVE…TKNG, VPEA…VEMF, TPEK…TKAG, and VPNK…VGDD. A helical transmembrane segment spans residues 1860-1882; it reads TSFILTIIVGIFLVVTIPLTFVW. The Cytoplasmic segment spans residues 1883–2347; sequence HRRLKNQKSA…THSGYGDGSD (465 aa). The 278-residue stretch at 1945-2222 folds into the Protein kinase domain; that stretch reads LTLRLLLGSG…DQLQLFRNFF (278 aa). ATP contacts are provided by residues 1951 to 1959 and Lys-1980; that span reads LGSGAFGEV. The active-site Proton acceptor is the Asp-2079. Residue Tyr-2274 is modified to Phosphotyrosine; by autocatalysis. The disordered stretch occupies residues 2284–2311; the sequence is GEEKSEGPLGSQESESCGLRKEEKEPHA. Residues 2301 to 2311 show a composition bias toward basic and acidic residues; sequence GLRKEEKEPHA. Tyr-2334 bears the Phosphotyrosine; by autocatalysis mark.

It belongs to the protein kinase superfamily. Tyr protein kinase family. Insulin receptor subfamily. In terms of assembly, interacts with PTPN6 (via SH2 1 domain); the interaction is direct and promotes ROS1 dephosphorylation. Interacts with PTPN11; may activate the PI3 kinase-mTOR signaling pathway. Interacts with VAV3; constitutive interaction mediating VAV3 phosphorylation. Post-translationally, phosphorylated. Probably autophosphorylates. Phosphorylation at Tyr-2274 is required for the interaction with PTPN6 that mediates ROS1 dephosphorylation. Phosphorylation at Tyr-2274 stimulates the kinase activity and the activation of the ERK1 signaling cascade. Phosphorylation at Tyr-2274 and/or Tyr-2334 recruits PTPN11. As to expression, expressed in brain. Expression is increased in primary gliomas.

The protein localises to the cell membrane. The enzyme catalyses L-tyrosyl-[protein] + ATP = O-phospho-L-tyrosyl-[protein] + ADP + H(+). With respect to regulation, inhibited by dephosphorylation by PTPN6. In terms of biological role, receptor tyrosine kinase (RTK) that plays a role in epithelial cell differentiation and regionalization of the proximal epididymal epithelium. NELL2 is an endogenous ligand for ROS1. Upon endogenous stimulation by NELL2, ROS1 activates the intracellular signaling pathway and triggers epididymal epithelial differentiation and subsequent sperm maturation. May activate several downstream signaling pathways related to cell differentiation, proliferation, growth and survival including the PI3 kinase-mTOR signaling pathway. Mediates the phosphorylation of PTPN11, an activator of this pathway. May also phosphorylate and activate the transcription factor STAT3 to control anchorage-independent cell growth. Mediates the phosphorylation and the activation of VAV3, a guanine nucleotide exchange factor regulating cell morphology. May activate other downstream signaling proteins including AKT1, MAPK1, MAPK3, IRS1 and PLCG2. The chain is Proto-oncogene tyrosine-protein kinase ROS (ROS1) from Homo sapiens (Human).